The sequence spans 421 residues: UDP-N-acetylglucosamine 1-carboxyvinyltransferase (421 aa).

Residue 22–23 coordinates phosphoenolpyruvate; sequence KN. Arg-92 contributes to the UDP-N-acetyl-alpha-D-glucosamine binding site. Cys-116 (proton donor) is an active-site residue. Cys-116 carries the 2-(S-cysteinyl)pyruvic acid O-phosphothioketal modification. UDP-N-acetyl-alpha-D-glucosamine contacts are provided by residues 121–125, Asp-308, and Ile-330; that span reads RPVDQ.

This sequence belongs to the EPSP synthase family. MurA subfamily.

The protein localises to the cytoplasm. It catalyses the reaction phosphoenolpyruvate + UDP-N-acetyl-alpha-D-glucosamine = UDP-N-acetyl-3-O-(1-carboxyvinyl)-alpha-D-glucosamine + phosphate. The protein operates within cell wall biogenesis; peptidoglycan biosynthesis. Functionally, cell wall formation. Adds enolpyruvyl to UDP-N-acetylglucosamine. The chain is UDP-N-acetylglucosamine 1-carboxyvinyltransferase from Ralstonia nicotianae (strain ATCC BAA-1114 / GMI1000) (Ralstonia solanacearum).